The following is a 294-amino-acid chain: Zinc finger protein 346 (294 aa).

N-acetylmethionine is present on M1. Low complexity predominate over residues 1–19; sequence MECPAPDATDAADPGEAGP. Residues 1 to 35 form a disordered region; that stretch reads MECPAPDATDAADPGEAGPYKGSEEPEGREPDGVR. Basic and acidic residues predominate over residues 22-35; that stretch reads GSEEPEGREPDGVR. The segment at 70 to 104 adopts a Matrin-type 1 zinc-finger fold; that stretch reads FTSTQCKVCCAMLISESQKLAHYQSKKHANKVKRY. Positions 75, 78, 91, and 97 each coordinate Zn(2+). K114 is covalently cross-linked (Glycyl lysine isopeptide (Lys-Gly) (interchain with G-Cter in SUMO2)). The segment at 131 to 165 adopts a Matrin-type 2 zinc-finger fold; that stretch reads DKNHCCPICNMTFSSPAVAQSHYLGKTHAKSLKLK. Zn(2+) contacts are provided by C136, C139, H152, and H158. K170 participates in a covalent cross-link: Glycyl lysine isopeptide (Lys-Gly) (interchain with G-Cter in SUMO2). Matrin-type zinc fingers lie at residues 182–216 and 236–270; these read DPDK…ETKL and GKGY…SPKT. The disordered stretch occupies residues 269-294; that stretch reads KTLVTLGSQTPVQTQPTPKDSSTVQD.

Forms a heteromeric complex with XPO5 and ILF3. Found in a nuclear export complex with XPO5, RAN, ILF3, ZNF346 and double-stranded RNA. Interacts with XPO5. Interacts with ILF3 in an RNA-independent manner. In terms of tissue distribution, expressed in all tissues tested, including heart, brain, spleen, lung, liver, muscle, kidney and testis. Exogenous expression induced apoptosis.

It is found in the nucleus. The protein localises to the nucleolus. Its subcellular location is the cytoplasm. Its function is as follows. Binds with low affinity to dsDNA and ssRNA, and with high affinity to dsRNA, with no detectable sequence specificity. May bind to specific miRNA hairpins. In Mus musculus (Mouse), this protein is Zinc finger protein 346 (Znf346).